Consider the following 95-residue polypeptide: Aspartyl/glutamyl-tRNA(Asn/Gln) amidotransferase subunit C (95 aa).

Belongs to the GatC family. In terms of assembly, heterotrimer of A, B and C subunits.

The enzyme catalyses L-glutamyl-tRNA(Gln) + L-glutamine + ATP + H2O = L-glutaminyl-tRNA(Gln) + L-glutamate + ADP + phosphate + H(+). It carries out the reaction L-aspartyl-tRNA(Asn) + L-glutamine + ATP + H2O = L-asparaginyl-tRNA(Asn) + L-glutamate + ADP + phosphate + 2 H(+). Functionally, allows the formation of correctly charged Asn-tRNA(Asn) or Gln-tRNA(Gln) through the transamidation of misacylated Asp-tRNA(Asn) or Glu-tRNA(Gln) in organisms which lack either or both of asparaginyl-tRNA or glutaminyl-tRNA synthetases. The reaction takes place in the presence of glutamine and ATP through an activated phospho-Asp-tRNA(Asn) or phospho-Glu-tRNA(Gln). The protein is Aspartyl/glutamyl-tRNA(Asn/Gln) amidotransferase subunit C of Acidithiobacillus ferrooxidans (strain ATCC 23270 / DSM 14882 / CIP 104768 / NCIMB 8455) (Ferrobacillus ferrooxidans (strain ATCC 23270)).